A 237-amino-acid chain; its full sequence is Speedy protein E4 (237 aa).

The segment at 1 to 61 is disordered; it reads MASGQARPPF…KRKSEWSDES (61 aa).

It belongs to the Speedy/Ringo family. Predominantly expressed in testis.

This is Speedy protein E4 from Homo sapiens (Human).